The sequence spans 579 residues: MRTTQYLLSTLKELPADAEIISHQLMLRAGMIRKLASGLYTWLPTGTRVLKKIENIVREEMNKAGAIEVVMPIVQPADLWQESERWEHYGPELLRFADRSERPFVLGPTHEEVITDLVRNEISSYKQLPLNFFQIQTKFRDEIRPRFGIMRAREFLMKDAYSFHNTLESLQETYQTMYQAYTKIFERMQLNFRAVQADTGSIGGSRSHEFQVLADSGEDEIVFSTVSDFAANIELAEALVPHEKRASPCETLRIIDTPNAKTIDQLVEQFSIPIEKTLKTLIVYAHKDSGHKLLALLVRGDHLINKVKAEKSPQVAKPLTFASEEDIRAHIGAGPGSLGPLHLKMPIIADRAVAVMSDFSAGSNKEDQHYFGINWERDLPLPIIEDLRNVVEGDPSPDGKGTLLIKRGIEVGHIFQLGTKYSQAMGAKVQGENGRQQMMIMGCYGIGVSRLVAAAIEQHHDQHGILWPEAIAPFQVAILPIHLKKSDAVRQEAERLYAELSSLGMDVIFDDRQERPGVMFADMELIGIPHTLIIGDRDLENNELEYRYRGIDDHKKQQLKISDVVSFLLEKINSHFNPK.

This sequence belongs to the class-II aminoacyl-tRNA synthetase family. ProS type 1 subfamily. As to quaternary structure, homodimer.

The protein resides in the cytoplasm. It carries out the reaction tRNA(Pro) + L-proline + ATP = L-prolyl-tRNA(Pro) + AMP + diphosphate. Catalyzes the attachment of proline to tRNA(Pro) in a two-step reaction: proline is first activated by ATP to form Pro-AMP and then transferred to the acceptor end of tRNA(Pro). As ProRS can inadvertently accommodate and process non-cognate amino acids such as alanine and cysteine, to avoid such errors it has two additional distinct editing activities against alanine. One activity is designated as 'pretransfer' editing and involves the tRNA(Pro)-independent hydrolysis of activated Ala-AMP. The other activity is designated 'posttransfer' editing and involves deacylation of mischarged Ala-tRNA(Pro). The misacylated Cys-tRNA(Pro) is not edited by ProRS. The polypeptide is Proline--tRNA ligase (Hamiltonella defensa subsp. Acyrthosiphon pisum (strain 5AT)).